A 220-amino-acid chain; its full sequence is Ribose-5-phosphate isomerase A (220 aa).

Residues 25-28 (TGST), 80-83 (DGAD), and 93-96 (KGGG) contribute to the substrate site. Catalysis depends on E102, which acts as the Proton acceptor. K120 is a binding site for substrate.

This sequence belongs to the ribose 5-phosphate isomerase family. As to quaternary structure, homodimer.

The enzyme catalyses aldehydo-D-ribose 5-phosphate = D-ribulose 5-phosphate. Its pathway is carbohydrate degradation; pentose phosphate pathway; D-ribose 5-phosphate from D-ribulose 5-phosphate (non-oxidative stage): step 1/1. Catalyzes the reversible conversion of ribose-5-phosphate to ribulose 5-phosphate. In Bacillus anthracis, this protein is Ribose-5-phosphate isomerase A.